The following is a 150-amino-acid chain: 3-dehydroquinate dehydratase (150 aa).

Tyrosine 26 (proton acceptor) is an active-site residue. The substrate site is built by asparagine 77, histidine 83, and aspartate 90. The active-site Proton donor is histidine 103. Substrate contacts are provided by residues 104 to 105 (LS) and arginine 114.

It belongs to the type-II 3-dehydroquinase family. Homododecamer.

It catalyses the reaction 3-dehydroquinate = 3-dehydroshikimate + H2O. It participates in metabolic intermediate biosynthesis; chorismate biosynthesis; chorismate from D-erythrose 4-phosphate and phosphoenolpyruvate: step 3/7. Catalyzes a trans-dehydration via an enolate intermediate. The sequence is that of 3-dehydroquinate dehydratase from Enterobacter sp. (strain 638).